Reading from the N-terminus, the 119-residue chain is Large ribosomal subunit protein uL22 (119 aa).

The protein belongs to the universal ribosomal protein uL22 family. Part of the 50S ribosomal subunit.

In terms of biological role, this protein binds specifically to 23S rRNA; its binding is stimulated by other ribosomal proteins, e.g. L4, L17, and L20. It is important during the early stages of 50S assembly. It makes multiple contacts with different domains of the 23S rRNA in the assembled 50S subunit and ribosome. Functionally, the globular domain of the protein is located near the polypeptide exit tunnel on the outside of the subunit, while an extended beta-hairpin is found that lines the wall of the exit tunnel in the center of the 70S ribosome. The sequence is that of Large ribosomal subunit protein uL22 from Trichormus variabilis (strain ATCC 29413 / PCC 7937) (Anabaena variabilis).